The primary structure comprises 72 residues: MAKDDVIEIQGTVTDTLPNAMFKVKLENGAEILAHVSGKIRMHYIRILPGDKVTVELSPYDLTKGRITYRFK.

The S1-like domain maps to 1–72 (MAKDDVIEIQ…TKGRITYRFK (72 aa)).

This sequence belongs to the IF-1 family. As to quaternary structure, component of the 30S ribosomal translation pre-initiation complex which assembles on the 30S ribosome in the order IF-2 and IF-3, IF-1 and N-formylmethionyl-tRNA(fMet); mRNA recruitment can occur at any time during PIC assembly.

The protein localises to the cytoplasm. One of the essential components for the initiation of protein synthesis. Stabilizes the binding of IF-2 and IF-3 on the 30S subunit to which N-formylmethionyl-tRNA(fMet) subsequently binds. Helps modulate mRNA selection, yielding the 30S pre-initiation complex (PIC). Upon addition of the 50S ribosomal subunit IF-1, IF-2 and IF-3 are released leaving the mature 70S translation initiation complex. This Lacticaseibacillus paracasei (strain ATCC 334 / BCRC 17002 / CCUG 31169 / CIP 107868 / KCTC 3260 / NRRL B-441) (Lactobacillus paracasei) protein is Translation initiation factor IF-1.